Here is a 342-residue protein sequence, read N- to C-terminus: uncharacterized protein (342 aa).

The Nudix hydrolase domain occupies 155–309; it reads TYGIHINGYV…KPNCALVMVD (155 aa).

This is an uncharacterized protein from Saccharomyces cerevisiae (strain ATCC 204508 / S288c) (Baker's yeast).